The following is a 360-amino-acid chain: Phospho-N-acetylmuramoyl-pentapeptide-transferase (360 aa).

The next 10 helical transmembrane spans lie at 27–47 (ILSI…LIAW), 73–93 (TMGG…WADL), 94–114 (TNPY…VGFV), 132–152 (WKYF…YAYG), 168–188 (VMPQ…VGTS), 199–219 (GLAI…AWAT), 236–256 (ASEL…FLWF), 263–283 (VFMG…IAVL), 288–308 (FLLV…ILQV), and 338–358 (VIVR…ATLK).

Belongs to the glycosyltransferase 4 family. MraY subfamily. The cofactor is Mg(2+).

It localises to the cell inner membrane. The enzyme catalyses UDP-N-acetyl-alpha-D-muramoyl-L-alanyl-gamma-D-glutamyl-meso-2,6-diaminopimeloyl-D-alanyl-D-alanine + di-trans,octa-cis-undecaprenyl phosphate = di-trans,octa-cis-undecaprenyl diphospho-N-acetyl-alpha-D-muramoyl-L-alanyl-D-glutamyl-meso-2,6-diaminopimeloyl-D-alanyl-D-alanine + UMP. It functions in the pathway cell wall biogenesis; peptidoglycan biosynthesis. Its function is as follows. Catalyzes the initial step of the lipid cycle reactions in the biosynthesis of the cell wall peptidoglycan: transfers peptidoglycan precursor phospho-MurNAc-pentapeptide from UDP-MurNAc-pentapeptide onto the lipid carrier undecaprenyl phosphate, yielding undecaprenyl-pyrophosphoryl-MurNAc-pentapeptide, known as lipid I. The sequence is that of Phospho-N-acetylmuramoyl-pentapeptide-transferase from Aliivibrio fischeri (strain MJ11) (Vibrio fischeri).